Reading from the N-terminus, the 500-residue chain is Sulfate adenylyltransferase (500 aa).

Positions 1 to 165 (MLSPHGGILQ…LEAIQLPAHY (165 aa)) are N-terminal. The catalytic stretch occupies residues 166 to 390 (DYLNLRKSPA…LRQYNPPRYR (225 aa)). A sulfate-binding site is contributed by glutamine 193. Residues 193-196 (QTRN) and 287-290 (GRDH) each bind ATP. Active-site residues include threonine 194, arginine 195, and asparagine 196. Arginine 195 contacts sulfate. Alanine 291 is a sulfate binding site. Isoleucine 329 provides a ligand contact to ATP. The interval 391–500 (QGFVIVVNHE…FLEDNKFFQF (110 aa)) is required for oligomerization; adenylyl-sulfate kinase-like.

Belongs to the sulfate adenylyltransferase family. As to quaternary structure, homohexamer. Dimer of trimers.

Its subcellular location is the cytoplasm. It catalyses the reaction sulfate + ATP + H(+) = adenosine 5'-phosphosulfate + diphosphate. The protein operates within sulfur metabolism; hydrogen sulfide biosynthesis; sulfite from sulfate: step 1/3. Functionally, catalyzes the first intracellular reaction of sulfate assimilation, forming adenosine-5'-phosphosulfate (APS) from inorganic sulfate and ATP. Plays an important role in sulfate activation as a component of the biosynthesis pathway of sulfur-containing amino acids. In Eremothecium gossypii (strain ATCC 10895 / CBS 109.51 / FGSC 9923 / NRRL Y-1056) (Yeast), this protein is Sulfate adenylyltransferase.